Here is a 630-residue protein sequence, read N- to C-terminus: GTPase-activating protein NEL1 (630 aa).

Belongs to the SEC23/SEC24 family. SEC23 subfamily.

It is found in the cytoplasm. It localises to the nucleus. Acts as a GTPase-activating protein (GAP) for SAR1. Contrary to its SEC23 homolog, NEL1 does not associate with SEC24 and its homologs, nor does it associate with the COPII components, suggesting that it is unlikely that NEL1 functions as a structural component of the vesicle coat machinery. May function as a signaling molecule. The chain is GTPase-activating protein NEL1 from Saccharomyces cerevisiae (strain ATCC 204508 / S288c) (Baker's yeast).